The primary structure comprises 173 residues: Chorion protein S19 (173 aa).

The N-terminal stretch at 1-21 (MNKFATLAVIFCACIVGSCYA) is a signal peptide.

This sequence belongs to the chorion protein S19 family.

The protein resides in the secreted. Chorion membrane (egg shell) protein; plays a role in protecting the egg from the environment. This chain is Chorion protein S19 (Cp19), found in Drosophila melanogaster (Fruit fly).